We begin with the raw amino-acid sequence, 70 residues long: Conotoxin AbVIB (70 aa).

The signal sequence occupies residues valine 1–alanine 17. Positions glutamate 18–arginine 41 are excised as a propeptide. The disordered stretch occupies residues serine 20–arginine 41. Cystine bridges form between cysteine 43-cysteine 57, cysteine 50-cysteine 61, and cysteine 56-cysteine 68.

The protein belongs to the conotoxin O1 superfamily. As to expression, expressed by the venom duct.

The protein localises to the secreted. This Conus abbreviatus (Abbreviated cone) protein is Conotoxin AbVIB.